We begin with the raw amino-acid sequence, 526 residues long: Nucleobase-ascorbate transporter 4 (526 aa).

12 helical membrane passes run 42–62 (IVML…MGGG), 69–89 (VINT…LFGS), 91–111 (LPVV…ITFS), 131–151 (IQGA…FGLW), 157–177 (FLSP…LLAF), 186–206 (IEIG…LPHL), 217–237 (FAVL…TAAG), 282–302 (AFAM…SFIA), 359–381 (RVVQ…GAVL), 388–410 (IFAA…LLQF), 420–440 (FILG…TEYL), and 457–477 (VIMQ…AFLL).

This sequence belongs to the nucleobase:cation symporter-2 (NCS2) (TC 2.A.40) family. As to expression, highly expressed in the root central cylinder. Expressed in the filaments and stigmatic papillae of pollinated flowers and developing siliques.

It is found in the membrane. The chain is Nucleobase-ascorbate transporter 4 (NAT4) from Arabidopsis thaliana (Mouse-ear cress).